Reading from the N-terminus, the 295-residue chain is Tissue factor (295 aa).

The signal sequence occupies residues 1 to 32; the sequence is METPAWPRVPRPETAVARTLLLGWVFAQVAGA. Over 33–251 the chain is Extracellular; the sequence is SGTTNTVAAY…MGQEKGEFRE (219 aa). 2 consecutive short sequence motifs (WKS motif) follow at residues 46–48 and 77–79; these read WKS. A disulfide bond links Cys81 and Cys89. N-linked (GlcNAc...) asparagine glycans are attached at residues Asn156 and Asn169. The WKS motif signature appears at 190–192; it reads WKS. An intrachain disulfide couples Cys218 to Cys241. A helical membrane pass occupies residues 252–274; that stretch reads IFYIIGAVVFVVIILVIILAISL. The Cytoplasmic segment spans residues 275 to 295; the sequence is HKCRKAGVGQSWKENSPLNVS. Residue Cys277 is the site of S-palmitoyl cysteine attachment.

The protein belongs to the tissue factor family. Interacts with HSPE; the interaction, inhibited by heparin, promotes the generation of activated factor X and activates coagulation in the presence of activated factor VII. In terms of tissue distribution, lung, placenta and pancreas.

It localises to the membrane. The protein resides in the secreted. In terms of biological role, initiates blood coagulation by forming a complex with circulating factor VII or VIIa. The [TF:VIIa] complex activates factors IX or X by specific limited proteolysis. TF plays a role in normal hemostasis by initiating the cell-surface assembly and propagation of the coagulation protease cascade. This Homo sapiens (Human) protein is Tissue factor (F3).